The chain runs to 641 residues: White-opaque regulator 3 (641 aa).

The segment covering 13 to 27 (ANVNHQQLSQDTNSI) has biased composition (polar residues). Disordered stretches follow at residues 13-38 (ANVN…QQQP), 146-245 (QLAS…PMTR), and 258-287 (PIIY…PEPR). 2 stretches are compositionally biased toward low complexity: residues 28–38 (PQQQLQQQQQP) and 151–160 (QNQDQNQSQN). Positions 161-172 (RYEQSSMTSIHT) are enriched in polar residues. Over residues 173-184 (NDNSSSVNNSPN) the composition is skewed to low complexity. The segment covering 193–204 (STFQPQHSNEGS) has biased composition (polar residues). Low complexity-rich tracts occupy residues 216 to 242 (QQQQ…PQQP) and 264 to 280 (SSNS…NSSS). The dksA C4-type zinc-finger motif lies at 317-337 (CRRCGSEIPLAERRFVLCPSC). Disordered regions lie at residues 366 to 409 (LSKE…KVCQ), 480 to 507 (MSHQ…PQPH), 522 to 550 (NSGV…HNGS), and 568 to 641 (LQLQ…YPNN). The span at 379 to 400 (QNNKSNEDQNNESRRGSQEKPA) shows a compositional bias: basic and acidic residues. The segment covering 486-495 (QPPPPPPPPL) has biased composition (pro residues). A compositionally biased stretch (polar residues) spans 522–533 (NSGVAGIQQPNN). The span at 569–579 (QLQQQQQQQQQ) shows a compositional bias: low complexity. Over residues 597 to 606 (SFPPPPPPPL) the composition is skewed to pro residues. Residues 610–641 (QHQGLQQYSHAQQQQQQQHQQQQPYHQEYPNN) show a composition bias toward low complexity.

The protein localises to the nucleus. Functionally, transcription factor that modulates the white-opaque switch. The sequence is that of White-opaque regulator 3 (WOR3) from Candida albicans (strain SC5314 / ATCC MYA-2876) (Yeast).